Consider the following 151-residue polypeptide: 3-hydroxyacyl-[acyl-carrier-protein] dehydratase FabZ (151 aa).

Residue H54 is part of the active site.

Belongs to the thioester dehydratase family. FabZ subfamily.

The protein localises to the cytoplasm. It carries out the reaction a (3R)-hydroxyacyl-[ACP] = a (2E)-enoyl-[ACP] + H2O. Functionally, involved in unsaturated fatty acids biosynthesis. Catalyzes the dehydration of short chain beta-hydroxyacyl-ACPs and long chain saturated and unsaturated beta-hydroxyacyl-ACPs. The protein is 3-hydroxyacyl-[acyl-carrier-protein] dehydratase FabZ of Blochmanniella floridana.